A 139-amino-acid chain; its full sequence is Immunogenic miracidial antigen 8I (139 aa).

The disordered stretch occupies residues 61–139 (IDVGDEDYHD…PKKYGSGYKH (79 aa)). Positions 64–85 (GDEDYHDGDDDVDYTDDVDDVD) are enriched in acidic residues. Polar residues predominate over residues 90 to 103 (SPSQLLQGGYQRNQ).

The protein belongs to the immunogenic miracidial antigen family.

This is Immunogenic miracidial antigen 8I (8I) from Schistosoma japonicum (Blood fluke).